The primary structure comprises 406 residues: Cysteine desulfurase (406 aa).

Lysine 226 is subject to N6-(pyridoxal phosphate)lysine. The active-site Cysteine persulfide intermediate is the cysteine 364.

It belongs to the class-V pyridoxal-phosphate-dependent aminotransferase family. Csd subfamily. In terms of assembly, homodimer. Interacts with SufE and the SufBCD complex composed of SufB, SufC and SufD. The interaction with SufE is required to mediate the direct transfer of the sulfur atom from the S-sulfanylcysteine. The cofactor is pyridoxal 5'-phosphate.

It is found in the cytoplasm. The catalysed reaction is (sulfur carrier)-H + L-cysteine = (sulfur carrier)-SH + L-alanine. The enzyme catalyses L-selenocysteine + AH2 = hydrogenselenide + L-alanine + A + H(+). Its pathway is cofactor biosynthesis; iron-sulfur cluster biosynthesis. Its function is as follows. Cysteine desulfurases mobilize the sulfur from L-cysteine to yield L-alanine, an essential step in sulfur metabolism for biosynthesis of a variety of sulfur-containing biomolecules. Component of the suf operon, which is activated and required under specific conditions such as oxidative stress and iron limitation. Acts as a potent selenocysteine lyase in vitro, that mobilizes selenium from L-selenocysteine. Selenocysteine lyase activity is however unsure in vivo. The polypeptide is Cysteine desulfurase (Escherichia coli O17:K52:H18 (strain UMN026 / ExPEC)).